A 152-amino-acid polypeptide reads, in one-letter code: D-aminoacyl-tRNA deacylase (152 aa).

Residues 137–138 carry the Gly-cisPro motif, important for rejection of L-amino acids motif; that stretch reads GP.

This sequence belongs to the DTD family. As to quaternary structure, homodimer.

Its subcellular location is the cytoplasm. The enzyme catalyses glycyl-tRNA(Ala) + H2O = tRNA(Ala) + glycine + H(+). The catalysed reaction is a D-aminoacyl-tRNA + H2O = a tRNA + a D-alpha-amino acid + H(+). Functionally, an aminoacyl-tRNA editing enzyme that deacylates mischarged D-aminoacyl-tRNAs. Also deacylates mischarged glycyl-tRNA(Ala), protecting cells against glycine mischarging by AlaRS. Acts via tRNA-based rather than protein-based catalysis; rejects L-amino acids rather than detecting D-amino acids in the active site. By recycling D-aminoacyl-tRNA to D-amino acids and free tRNA molecules, this enzyme counteracts the toxicity associated with the formation of D-aminoacyl-tRNA entities in vivo and helps enforce protein L-homochirality. The polypeptide is D-aminoacyl-tRNA deacylase (Geobacillus sp. (strain WCH70)).